Reading from the N-terminus, the 101-residue chain is DNA-binding protein Fis (101 aa).

The segment at residues 77–96 is a DNA-binding region (H-T-H motif); it reads QTRAANMLGINRGTLRKKLK.

The protein belongs to the transcriptional regulatory Fis family. Homodimer.

Activates ribosomal RNA transcription. Plays a direct role in upstream activation of rRNA promoters. The sequence is that of DNA-binding protein Fis from Shewanella pealeana (strain ATCC 700345 / ANG-SQ1).